We begin with the raw amino-acid sequence, 416 residues long: tRNA (guanine-N(7)-)-methyltransferase non-catalytic subunit wuho (416 aa).

The interval 47–88 (TQSQESCPATATSTTAGKEPGGKEQQLAKQPEEGGTSASGSV) is disordered. Residues 49 to 62 (SQESCPATATSTTA) show a composition bias toward polar residues. WD repeat units follow at residues 89–130 (ATST…ARLL), 177–216 (GHLS…DIHS), 220–258 (GHRE…ELLQ), and 317–357 (AGSW…PTTN).

It belongs to the WD repeat TRM82 family. As to quaternary structure, forms a heterodimer with the catalytic subunit Mettl1. Interacts with mei-P26 and weakly interacts with bgcn; required for the function or formation of the mei-P26-bgcn-bam-sxl complex. Interacts with nanos; may be involved in mei-P26-dependent derepression of the BMP signaling pathway. Interacts with Myc; the interaction may be mediated by mei-P26 and may be involved in the regulation of ribosome biogenesis. In testis, it is present at high level in hub cells, a niche for germline stem cells of testis. Ubiquitously expressed in all testicular cells throughout spermatogenesis. Ubiquitously expressed in all germline and somatic cells of the ovary.

The protein localises to the nucleus. It localises to the cytoplasm. It functions in the pathway tRNA modification; N(7)-methylguanine-tRNA biosynthesis. Its function is as follows. Required for the Mettl1-dependent formation of N(7)-methylguanine at position 46 (m7G46) in tRNA. In the Mettl1-wuho methyltransferase complex, it is required to stabilize and induce conformational changes of the catalytic subunit. Required for binding of nanos mRNA and repression of translation by the mei-P26-bgcn-bam-sxl complex. May cooperate with mei-P26 and nanos to derepress the BMP signaling pathway. May cooperate with mei-P26 to suppress expression of a subset of microRNAs. May cooperate with mei-P26 to regulate bam expression levels in germline cells during gametogenesis. Required to promote mitosis to meiosis transition during gametogenesis. May regulate germline cell division in part by regulating ribosome biogenesis. This chain is tRNA (guanine-N(7)-)-methyltransferase non-catalytic subunit wuho, found in Drosophila erecta (Fruit fly).